Consider the following 906-residue polypeptide: Cadherin-2 (906 aa).

The signal sequence occupies residues 1–25; sequence MCRIVGAPRTLLPLLAALLQASVEA. A propeptide spanning residues 26–159 is cleaved from the precursor; that stretch reads SGGIALCKTG…HNGHLQRQKR (134 aa). Ser-96 and Ser-135 each carry phosphoserine. Cadherin domains are found at residues 160–267, 268–382, 383–497, 498–603, and 604–714; these read DWVI…RPEF, LHQV…PPEF, TAMS…NPYF, APNP…DNAP, and QVVP…DVDR. The Extracellular portion of the chain corresponds to 160–724; it reads DWVIPPINLP…IVGAGLGTGA (565 aa). Glu-170 is a binding site for Ca(2+). Residue Asn-190 is glycosylated (N-linked (GlcNAc...) asparagine). Ca(2+)-binding residues include Asp-226, Glu-228, Asp-259, Met-260, Asn-261, Asp-262, and Asn-263. N-linked (GlcNAc...) asparagine glycosylation occurs at Asn-273. Ca(2+) contacts are provided by Asp-293, Asp-295, and Asn-301. A glycan (N-linked (GlcNAc...) asparagine) is linked at Asn-325. A Ca(2+)-binding site is contributed by Asp-353. N-linked (GlcNAc...) asparagine glycans are attached at residues Asn-402, Asn-572, Asn-622, Asn-651, and Asn-692. Residues 725–745 traverse the membrane as a helical segment; it reads IIAILLCIIILLILVLMFVVW. Over 746-906 the chain is Cytoplasmic; the sequence is MKRRDKERQA…LADMYGGGDD (161 aa). Over residues 863 to 880 the composition is skewed to low complexity; that stretch reads SGSTAGSLSSLNSSSSGG. Residues 863-884 are disordered; the sequence is SGSTAGSLSSLNSSSSGGEQDY.

In terms of assembly, homodimer (via extracellular region). Can also form heterodimers with other cadherins (via extracellular region). Dimerization occurs in trans, i.e. with a cadherin chain from another cell. Interacts with CDCP1. Interacts with PCDH8; this complex may also include TAOK2. The interaction with PCDH8 may lead to internalization through TAOK2/p38 MAPK pathway. Identified in a complex containing FGFR4, NCAM1, CDH2, PLCG1, FRS2, SRC, SHC1, GAP43 and CTTN. May interact with OBSCN (via protein kinase domain 2). Interacts with FBXO45. Post-translationally, cleaved by MMP24. Ectodomain cleavage leads to the generation of a soluble 90 kDa N-terminal soluble fragment and a 45 kDa membrane-bound C-terminal fragment 1 (CTF1), which is further cleaved by gamma-secretase into a 35 kDa. Cleavage in neural stem cells by MMP24 affects CDH2-mediated anchorage of neural stem cells to ependymocytes in the adult subependymal zone, leading to modulate neural stem cell quiescence. In terms of processing, may be phosphorylated by OBSCN.

The protein resides in the cell membrane. The protein localises to the sarcolemma. It localises to the cell junction. Its subcellular location is the cell surface. It is found in the desmosome. The protein resides in the adherens junction. In terms of biological role, calcium-dependent cell adhesion protein; preferentially mediates homotypic cell-cell adhesion by dimerization with a CDH2 chain from another cell. Cadherins may thus contribute to the sorting of heterogeneous cell types. Acts as a regulator of neural stem cells quiescence by mediating anchorage of neural stem cells to ependymocytes in the adult subependymal zone: upon cleavage by MMP24, CDH2-mediated anchorage is affected, leading to modulate neural stem cell quiescence. Plays a role in cell-to-cell junction formation between pancreatic beta cells and neural crest stem (NCS) cells, promoting the formation of processes by NCS cells. CDH2 may be involved in neuronal recognition mechanism. In hippocampal neurons, may regulate dendritic spine density. The sequence is that of Cadherin-2 (CDH2) from Rhinolophus ferrumequinum (Greater horseshoe bat).